The sequence spans 72 residues: Translation initiation factor IF-1 (72 aa).

Residues 1–72 form the S1-like domain; the sequence is MAKEDSIEMQ…TKGRIIFRAR (72 aa).

The protein belongs to the IF-1 family. As to quaternary structure, component of the 30S ribosomal translation pre-initiation complex which assembles on the 30S ribosome in the order IF-2 and IF-3, IF-1 and N-formylmethionyl-tRNA(fMet); mRNA recruitment can occur at any time during PIC assembly.

It is found in the cytoplasm. Its function is as follows. One of the essential components for the initiation of protein synthesis. Stabilizes the binding of IF-2 and IF-3 on the 30S subunit to which N-formylmethionyl-tRNA(fMet) subsequently binds. Helps modulate mRNA selection, yielding the 30S pre-initiation complex (PIC). Upon addition of the 50S ribosomal subunit IF-1, IF-2 and IF-3 are released leaving the mature 70S translation initiation complex. The sequence is that of Translation initiation factor IF-1 from Actinobacillus succinogenes (strain ATCC 55618 / DSM 22257 / CCUG 43843 / 130Z).